Consider the following 336-residue polypeptide: UPF0324 membrane protein spr0034 (336 aa).

A run of 8 helical transmembrane segments spans residues 65-84, 91-113, 118-140, 153-175, 211-233, 249-271, 286-305, and 312-334; these read LLQY…QVFA, PVIL…FFAL, ATLV…APVI, VIFF…LHLS, SATI…LSYW, VFPL…TSLG, FLIV…VAMV, and ILLG…TLIG.

Belongs to the UPF0324 family.

The protein resides in the cell membrane. This is UPF0324 membrane protein spr0034 from Streptococcus pneumoniae (strain ATCC BAA-255 / R6).